A 1709-amino-acid polypeptide reads, in one-letter code: Intraflagellar transport protein 122 (1709 aa).

WD repeat units lie at residues 51-89 (TQHP…ALFK) and 132-171 (SFKG…LNSC). The interval 209–229 (TIPQTVTPSASASGRSGSGKR) is disordered. The WD 3 repeat unit spans residues 634 to 673 (LHRSPIVSLDISPDRKYISVVDRSDVVSVYKFLDDSEIVL). One copy of the LRR 1 repeat lies at 1231–1256 (IEALERLRLSGNTSKEAIIIKQLIDA). The disordered stretch occupies residues 1378-1404 (LSGEDTVKASSQRSKKDNPPSLRSTIG). An LRR 2 repeat occupies 1414-1436 (LGSLAHIDLGINNMNIPPGISEL).

The protein resides in the cell projection. The protein localises to the cilium. It is found in the flagellum. It localises to the cytoplasm. Its subcellular location is the cytoskeleton. The protein resides in the flagellum axoneme. The protein localises to the flagellum basal body. Functionally, component of the intraflagellar transport complex A (IFT-A) involved in flagellar assembly. The polypeptide is Intraflagellar transport protein 122 (Giardia intestinalis (strain ATCC 50803 / WB clone C6) (Giardia lamblia)).